The following is a 105-amino-acid chain: Vacuolar ATPase assembly integral membrane protein VMA21 homolog (105 aa).

The interval 1-26 (MSTKNKKAAGGNGGAPKQTRQQSHDS) is disordered. Over 1–36 (MSTKNKKAAGGNGGAPKQTRQQSHDSQDYSSFKTVL) the chain is Cytoplasmic. The chain crosses the membrane as a helical span at residues 37 to 57 (FYCMLIVFLPVLTFFVLKGFV). Residues 58–68 (LDQFLDISEVK) lie on the Lumenal side of the membrane. The helical transmembrane segment at 69-89 (VNIASAVGAVVALHVALGLYI) threads the bilayer. Residues 90 to 105 (YRAYFGAPGSKASKTD) lie on the Cytoplasmic side of the membrane.

It belongs to the VMA21 family.

The protein resides in the endoplasmic reticulum membrane. It localises to the endoplasmic reticulum-Golgi intermediate compartment membrane. The protein localises to the cytoplasmic vesicle. It is found in the COPII-coated vesicle membrane. In terms of biological role, required for the assembly of the V0 complex of the vacuolar ATPase (V-ATPase) in the endoplasmic reticulum. The chain is Vacuolar ATPase assembly integral membrane protein VMA21 homolog from Drosophila yakuba (Fruit fly).